The following is a 228-amino-acid chain: Leucyl/phenylalanyl-tRNA--protein transferase (228 aa).

This sequence belongs to the L/F-transferase family.

It is found in the cytoplasm. It carries out the reaction N-terminal L-lysyl-[protein] + L-leucyl-tRNA(Leu) = N-terminal L-leucyl-L-lysyl-[protein] + tRNA(Leu) + H(+). The catalysed reaction is N-terminal L-arginyl-[protein] + L-leucyl-tRNA(Leu) = N-terminal L-leucyl-L-arginyl-[protein] + tRNA(Leu) + H(+). The enzyme catalyses L-phenylalanyl-tRNA(Phe) + an N-terminal L-alpha-aminoacyl-[protein] = an N-terminal L-phenylalanyl-L-alpha-aminoacyl-[protein] + tRNA(Phe). In terms of biological role, functions in the N-end rule pathway of protein degradation where it conjugates Leu, Phe and, less efficiently, Met from aminoacyl-tRNAs to the N-termini of proteins containing an N-terminal arginine or lysine. The chain is Leucyl/phenylalanyl-tRNA--protein transferase from Sulfurimonas denitrificans (strain ATCC 33889 / DSM 1251) (Thiomicrospira denitrificans (strain ATCC 33889 / DSM 1251)).